Consider the following 31-residue polypeptide: Glucagon-5 (31 aa).

It belongs to the glucagon family.

It is found in the secreted. Its function is as follows. Glucagon plays a key role in glucose metabolism and homeostasis. Regulates blood glucose by increasing gluconeogenesis and decreasing glycolysis. The polypeptide is Glucagon-5 (Huso dauricus (Kaluga sturgeon)).